Reading from the N-terminus, the 95-residue chain is uncharacterized protein (95 aa).

The first 21 residues, 1–21 (MKVLSISLIFFALLLTGCSQV), serve as a signal peptide directing secretion.

This is an uncharacterized protein from Archaeoglobus fulgidus (strain ATCC 49558 / DSM 4304 / JCM 9628 / NBRC 100126 / VC-16).